The following is a 582-amino-acid chain: DNA polymerase IV (582 aa).

A disordered region spans residues 127-161 (NADDGQSSTDKESEISTDVESERNDDSNNKDMIQA). Basic and acidic residues predominate over residues 135–155 (TDKESEISTDVESERNDDSNN). The tract at residues 360-369 (RGYSKCGDID) is involved in ssDNA binding. Residues D367, D369, and D502 each coordinate Mg(2+).

Belongs to the DNA polymerase type-X family. As to quaternary structure, interacts with DNL4 subunit of the DNL4-LIF1 complex. Mg(2+) serves as cofactor.

Its subcellular location is the nucleus. The catalysed reaction is DNA(n) + a 2'-deoxyribonucleoside 5'-triphosphate = DNA(n+1) + diphosphate. With respect to regulation, stimulated by the interaction with the DNL4-LIF1 complex. Its function is as follows. Repair polymerase. Involved in gap-filling in DNA nonhomologous end joining (NHEJ) required for double-strand break repair. Seems to conduct DNA synthesis in a stepwise distributive fashion rather than in a processive fashion as for other DNA polymerases. Preferentially acts upon short gaps formed by the alignment of linear duplexes with complementary single-strand ends. Required for filling gaps that need removal of a 5'- or 3'-terminal mismatch, however lacks nuclease activities. This is DNA polymerase IV (POL4) from Saccharomyces cerevisiae (strain ATCC 204508 / S288c) (Baker's yeast).